The chain runs to 746 residues: MNLEDISMIMKLFDSNMHKLQGNLRSYQTEMHQIHKELTEKLSHADLLYRSLIPLHDHLVASLSEVNAHVMKLNVQLHINRQSVRLGDYEYYEKSIDNPYSSIRSGLQAIEKPGCAEAICQSSKPAFVECLPSSTSEEVPVVAVQEASSTNQLDAISVVNENLSEERDATPQPLAVSKNMEETMPSNPFHEQLEGSLEEIPVGSKIVVETEKANNPVRSEASAPATSDNQSLLAAKQGTQTIGTGICNKISKSTINMPNNWQLENPTEVTAASIEKVNKLPKSPRNRFLLPPKGGTETTRRDIYNQILKDMAAFPENTIVTAVLASVDVTDNCAYVAKWDESSDRIKKVLQRQLPLQELDQLPDYGDIFAVLDSINNIITRITINSSSAGGGYDAYLIDFGEHIHFDGNETIFKLPDDIKRLPAQAIRCDLINCDIANMHCFVNTYIKIRVHENNNSTLVAEPVIDRLSRPTKTNTTKYPAGITEDDMAMLNEIDESTSDPLKAVLGFRPKDEQRICRHYDPKLNGCFKGNNCRFAHEPFAPNGATKDVELARALPETIFDTTVHFEIGSIVGILITFINGPTEVYGQFLDGSPPLVWDKKDVPENKRTFKSKPRLLDIVLALYSDGCFYRAQIIDEFPSEYMIFYVDYGNTEFVPLSCLAPCENVDSFKPHRVFSFHIEGIVRSKNLTHQKTIECIEYLKSKLLNTEMNVHLVQRLPDGFLIRFLDDWKYIPEQLLQRNYAQVSQ.

The tract at residues 1-310 (MNLEDISMIM…RDIYNQILKD (310 aa)) is involved in homooligomerization. Positions 311–489 (MAAFPENTIV…PAGITEDDMA (179 aa)) are non-canonical tudor domain. The C3H1-type zinc finger occupies 511-540 (KDEQRICRHYDPKLNGCFKGNNCRFAHEPF). The Tudor domain maps to 613-670 (KPRLLDIVLALYSDGCFYRAQIIDEFPSEYMIFYVDYGNTEFVPLSCLAPCENVDSFK).

It belongs to the Tudor domain containing protein family. Homooligomerizes (via N-terminus). Component of the ping-pong piRNA processing (4P) complex consisting of krimp, aub and AGO3; a single molecule of krimp can bind both aub and AGO3 without the need for homooligomerization. Interacts (via canonical tudor domain) with aub (via N-terminus when symmetrically dimethylated on arginine residues). Interacts (via non-canonical tudor domain) with AGO3 (via N-terminus when unmethylated on arginine residues); this interaction leads to symmetrical dimethylation on AGO3 arginine residues and its subsequent dissociation from krimp. Krimp associated AGO3 is mostly free of piRNA binding and the interaction plays an important role in the loading of AGO3 with piRNAs; piRNA binding stimulates methylation of ACO3 by the csul/PRMT5 methylosome complex and promotes dissociation of the two proteins. As to expression, widely expressed in female germline cells, including differentiating germ cells in germarium and egg chambers (at protein level).

It localises to the cytoplasm. It is found in the perinuclear region. Its subcellular location is the cytoplasmic ribonucleoprotein granule. Functionally, stable structural component of the perinuclear meiotic nuage, a germline-specific subcellular membraneless ribonucleoprotein compartment involved in production of transposable element-repressing Piwi-interacting RNA (piRNA)-induced silencing complexes (piRISCs), which are essential for maintaining germline integrity during oogenesis. Scaffold component of the ping-pong piRNA processing (4P) complex that recruits the Piwi proteins aub and AGO3 to specific subregions of the nuage where it coordinates their activity in the ping-pong amplification step of secondary piRNA biogenesis. Binds methylated aub, which is associated with piRNA, and unmethylated AGO3, which is not associated with piRNA, bringing the Piwi proteins into close proximity and facilitating the loading of freshly cut piRNAs generated by aub onto AGO3. Promotes asymmetric ping-pong amplification by aub and AGO3 to bias production towards antisense piRNAs capable of silencing transposable elements. Required for symmetrical dimethylation of AGO3, probably by recruitment to the nuage where methylosome components are located; dimethylation promotes AGO3 dissociation and interaction with other tudor-domain containing proteins such as tud. Required for the recruitment of mael to the perinuclear meiotic nuage. Required for the recruitment of aub to the nuage in testes but not in ovaries. Involved in repression of long interspersed nuclear elements (LINEs) including HeT-A, I-element LINEs and possibly mst40, but not TART LINEs. The chain is Tudor domain-containing protein krimp from Drosophila melanogaster (Fruit fly).